The following is a 51-amino-acid chain: Insulin (51 aa).

Disulfide bonds link Cys7/Cys37, Cys19/Cys50, and Cys36/Cys41.

It belongs to the insulin family. In terms of assembly, heterodimer of a B chain and an A chain linked by two disulfide bonds.

It is found in the secreted. Functionally, insulin decreases blood glucose concentration. It increases cell permeability to monosaccharides, amino acids and fatty acids. It accelerates glycolysis, the pentose phosphate cycle, and glycogen synthesis in liver. The protein is Insulin (INS) of Acomys cahirinus (Cairo spiny mouse).